Here is an 899-residue protein sequence, read N- to C-terminus: MLKAVLEPAIGSKSKRDLKDYLPTLRNINKLERWALLLADEDFSKETQKLKYELKSGNSLENILERAFTLSREAARRRLKERPYDVQIIAGLALHEGKIIEMKTGEGKTLSSVQAAYLNSLTGDGVIIVTVNDYLAERDSNWMKPVFDLLGVTVGVVLSNMDYERRKDQYAKDITYVTNNELGFDYLRDNMRYDLNEKCLRKFNYCIIDEIDSILIDEARTPLIISGPTEGNTNAYLEVNSLVSFLKECSKDSKSGDYPLEIDDLDGDYTIDEKAKRISFTAKGLNNLEQLLVSKGIISGSLYTDSNFNYVHYMTQALKAHLLFFKNREYIVGDSGVEIVDEFTGRVLTGRRYSDGLHQAIEAKEEVRVANENKTMATITFQNLFRMFDKISGMTGTADTEAKEFHKIYNLDVVVVPTNRLLARIDEEDTIYYTEEFKFHAITDEVYKTYKKGQPVLVGTASIEKSEILSAMFKNRGIKHEVLNAKNHSREAFIIAEAGAKHAVTIATNMAGRGTDIKLGGNIEHRVRKKIGTNVSLEEFQEAVKNERENYLKDYNEVKSLGGLYVIGSERHESRRIDNQLRGRSGRQGDPGRSRFYVSLEDDLMRLFAGDSLRSLMGKLGMATGEPITHSLLTKSLINAQKRVEDRNFEIRKHLLEYDDVITKQRDFIYAQRNSILEDTAIKDRILIALEEYLSFLLEGTKGGSVSSVFLNEINLIFAYMLESLGSIENINSLDLKAKLMQIARANLDEKENLIGRDLFNGFLRYEYLKNIDFKFQEHLANLDSLREAVYLRSYANKNPITEYKEEGFLIFSELIKDIKVSTIRRVLQLKLDSNSSDFKSVKKSKNVNSIHKELSGILINENKNVSNVQVVRSSPKIGRNEPCYCGSGKKYKNCHGKS.

ATP-binding positions include Q87, 105-109, and D516; that span reads GEGKT. Zn(2+)-binding residues include C884, C886, C895, and H896.

It belongs to the SecA family. In terms of assembly, monomer and homodimer. Part of the essential Sec protein translocation apparatus which comprises SecA, SecYEG and auxiliary proteins SecDF. Other proteins may also be involved. Zn(2+) serves as cofactor.

It localises to the cell inner membrane. The protein resides in the cytoplasm. It catalyses the reaction ATP + H2O + cellular proteinSide 1 = ADP + phosphate + cellular proteinSide 2.. Its function is as follows. Part of the Sec protein translocase complex. Interacts with the SecYEG preprotein conducting channel. Has a central role in coupling the hydrolysis of ATP to the transfer of proteins into and across the cell membrane, serving as an ATP-driven molecular motor driving the stepwise translocation of polypeptide chains across the membrane. This Borrelia garinii subsp. bavariensis (strain ATCC BAA-2496 / DSM 23469 / PBi) (Borreliella bavariensis) protein is Protein translocase subunit SecA.